A 416-amino-acid polypeptide reads, in one-letter code: E3 ubiquitin-protein ligase RNFT1 (416 aa).

A compositionally biased stretch (polar residues) spans 27-45 (QSSSGHTHHQPGSNDSPSV). 2 disordered regions span residues 27-50 (QSSSGHTHHQPGSNDSPSVCMSLP) and 63-116 (GDVT…ADSR). The segment covering 77 to 86 (GARSSSRRVR) has biased composition (basic residues). 6 consecutive transmembrane segments (helical) span residues 146 to 166 (LVVQHITGISVGIGLLTTFLY), 184 to 204 (LQCLWILVFLLFSSLLLYYTF), 214 to 234 (VFMNPSLGPLHFFDALWVVGI), 237 to 257 (FIGKFFFMGLKCIILLVPSFV), 265 to 287 (YWYMALEEVAQCYCMLVSTPVWF), and 302 to 322 (WHFGILLALLYLILKLLIIFG). A required for ubiquitin ligase activity and for protection against ER stress-induced cell death region spans residues 349 to 400 (CSEVDGMCAICQAEFIKPIVLVCQHVFCEECISLWFNKEKTCPLCRTVISNQ). The RING-type zinc finger occupies 356–394 (CAICQAEFIKPIVLVCQHVFCEECISLWFNKEKTCPLCR).

The protein resides in the endoplasmic reticulum membrane. It catalyses the reaction S-ubiquitinyl-[E2 ubiquitin-conjugating enzyme]-L-cysteine + [acceptor protein]-L-lysine = [E2 ubiquitin-conjugating enzyme]-L-cysteine + N(6)-ubiquitinyl-[acceptor protein]-L-lysine.. The protein operates within protein modification; protein ubiquitination. Functionally, E3 ubiquitin-protein ligase that acts in the endoplasmic reticulum (ER)-associated degradation (ERAD) pathway, which targets misfolded proteins that accumulate in the endoplasmic reticulum (ER) for ubiquitination and subsequent proteasome-mediated degradation. Protects cells from ER stress-induced apoptosis. This is E3 ubiquitin-protein ligase RNFT1 (rnft1) from Xenopus tropicalis (Western clawed frog).